A 185-amino-acid polypeptide reads, in one-letter code: Orotate phosphoribosyltransferase (185 aa).

5-phospho-alpha-D-ribose 1-diphosphate is bound by residues R98, K99, K102, H104, and 128 to 136; that span reads EDVTTTGGS. Residues T132 and R160 each coordinate orotate.

It belongs to the purine/pyrimidine phosphoribosyltransferase family. PyrE subfamily. Homodimer. Requires Mg(2+) as cofactor.

It carries out the reaction orotidine 5'-phosphate + diphosphate = orotate + 5-phospho-alpha-D-ribose 1-diphosphate. It participates in pyrimidine metabolism; UMP biosynthesis via de novo pathway; UMP from orotate: step 1/2. Functionally, catalyzes the transfer of a ribosyl phosphate group from 5-phosphoribose 1-diphosphate to orotate, leading to the formation of orotidine monophosphate (OMP). The sequence is that of Orotate phosphoribosyltransferase from Bradyrhizobium sp. (strain ORS 278).